A 216-amino-acid chain; its full sequence is Chaperone protein TorD (216 aa).

Belongs to the TorD/DmsD family. TorD subfamily.

The protein localises to the cytoplasm. Its function is as follows. Involved in the biogenesis of TorA. Acts on TorA before the insertion of the molybdenum cofactor and, as a result, probably favors a conformation of the apoenzyme that is competent for acquiring the cofactor. This Photobacterium profundum (strain SS9) protein is Chaperone protein TorD.